A 472-amino-acid chain; its full sequence is Alanine--anticapsin ligase (472 aa).

Residue Glu109 coordinates Mg(2+). Positions 138 and 178 each coordinate ATP. The 214-residue stretch at 142 to 355 (RDAFNKAGVK…MAQLLLDVLC (214 aa)) folds into the ATP-grasp domain. Residue Leu182 participates in Mg(2+) binding. ATP is bound by residues 184-185 (SS), 226-229 (EEFL), and Gln268. Residues Glu273 and 309 to 311 (HTE) each bind substrate. Mg(2+) contacts are provided by Glu311 and Glu324. Residue 328–331 (RFAG) participates in substrate binding.

Monomer or homodimer. Mg(2+) serves as cofactor.

It carries out the reaction L-anticapsin + L-alanine + ATP = bacilysin + ADP + phosphate + H(+). The protein operates within antibiotic biosynthesis; bacilysin biosynthesis. Its function is as follows. Part of the bacABCDEFG operon responsible for the biosynthesis of bacilysin, an irreversible inactivator of the glutaminase domain of glucosamine synthetase. Catalyzes the formation of alpha-dipeptides from various L-amino acids in the presence of ATP. In vivo catalyzes the ligation of L-alanine and L-anticapsin (epoxycyclohexanonyl-Ala) to produce the final bacilysin antibiotic (L-Ala-L-4S-cyclohexenonyl-Ala dipeptide). The substrate specificity is restricted to small amino acids such as L-Ala, for the N-terminal end of the dipeptide, whereas a wide range of hydrophobic amino acids such as L-Phe, L-Tyr and L-Met are recognized for the C-terminal end. The polypeptide is Alanine--anticapsin ligase (Bacillus subtilis (strain 168)).